The sequence spans 709 residues: DCC-interacting protein 13-alpha (709 aa).

The segment at 1–428 is required for RAB5A binding; the sequence is MPGIDKLPIE…RPPTARTSSS (428 aa). Residues 3 to 268 form the BAR domain; that stretch reads GIDKLPIEET…DPLYVPDPDP (266 aa). The stretch at 215–259 forms a coiled coil; the sequence is SENLNEQLEEFLANIGTSVQNVRREMDSDIETMQQTIEDLEVASD. One can recognise a PH domain in the interval 277-375; that stretch reads LTRKAGYLNA…WICTINNISK (99 aa). 3 disordered regions span residues 397-434, 467-491, and 645-709; these read AVTP…LGSE, GQAK…STKS, and VKEK…ESEA. Threonine 399 carries the post-translational modification Phosphothreonine. Serine 401 is modified (phosphoserine). Residues 403–414 carry the F&amp;H motif; it reads SFQQRHESLRPA. Serine 410 is subject to Phosphoserine; by PKA. The region spanning 496 to 656 is the PID domain; the sequence is SILHQLFIVR…EKQQKELNKQ (161 aa). A coiled-coil region spans residues 621–673; it reads LAKQIALHAELDRRASEKQKEIERVKEKQQKELNKQKQIEKDLEEQSRLIAAS. Basic and acidic residues predominate over residues 645–667; sequence VKEKQQKELNKQKQIEKDLEEQS. Residues 674-693 are compositionally biased toward polar residues; that stretch reads SRPNQASSEGQFVVLSSSQS. Phosphoserine occurs at positions 693 and 696. Basic and acidic residues predominate over residues 700–709; sequence EGGKKRESEA.

As to quaternary structure, homodimer. Binds RAB5A/Rab5 through an N-terminal domain. This interaction is essential for its recruitment to endosomal membranes as well as its role in cell proliferation. Binds DCC and the catalytic domain of the inactive form of AKT2 through its PID domain. Binds PIK3CA and subunits of the NuRD/MeCP1 complex. Interacts with OCRL and INPP5B. Interacts with NTRK2. Interacts with APPL2; interaction is independent of follicle stimulating hormone stimulation; interaction is decreased by adiponectin in a time-dependent manner. Forms a complex with APPL2 and RUVBL2. Forms a complex comprising APPL2, RUVBL2, CTNNB1, HDAC1 and HDAC2; interaction reduces interaction between CTNNB1, HDAC1, HDAC2 and RUVBL2 leading to the decrease of deacetylase activity of this complex; affects the recruitment of repressive complexes to the Wnt target genes. Interacts with ANXA2. Interacts with TGFBR1; interaction is TGF beta dependent; mediates trafficking of the TGFBR1 from the endosomes to the nucleus via microtubules in a TRAF6-dependent manner. Interacts with PRKCZ. Interacts with PIK3R1 and APPL2. Interacts with ADIPOR1; ADIPOQ enhances this interaction; inhibites adiponectin-stimulated binding of APPL2 to ADIPOR1. Post-translationally, phosphorylation at Ser-410 by PKA severely impairs binding to OCRL. In terms of tissue distribution, high levels in heart, ovary, pancreas and skeletal muscle.

It localises to the early endosome membrane. It is found in the nucleus. Its subcellular location is the cytoplasm. The protein localises to the endosome. The protein resides in the cell projection. It localises to the ruffle. It is found in the cytoplasmic vesicle. Its subcellular location is the phagosome. Functionally, multifunctional adapter protein that binds to various membrane receptors, nuclear factors and signaling proteins to regulate many processes, such as cell proliferation, immune response, endosomal trafficking and cell metabolism. Regulates signaling pathway leading to cell proliferation through interaction with RAB5A and subunits of the NuRD/MeCP1 complex. Functions as a positive regulator of innate immune response via activation of AKT1 signaling pathway by forming a complex with APPL1 and PIK3R1. Inhibits Fc-gamma receptor-mediated phagocytosis through PI3K/Akt signaling in macrophages. Regulates TLR4 signaling in activated macrophages. Involved in trafficking of the TGFBR1 from the endosomes to the nucleus via microtubules in a TRAF6-dependent manner. Plays a role in cell metabolism by regulating adiponecting and insulin signaling pathways. Required for fibroblast migration through HGF cell signaling. Positive regulator of beta-catenin/TCF-dependent transcription through direct interaction with RUVBL2/reptin resulting in the relief of RUVBL2-mediated repression of beta-catenin/TCF target genes by modulating the interactions within the beta-catenin-reptin-HDAC complex. This chain is DCC-interacting protein 13-alpha, found in Homo sapiens (Human).